Here is a 1081-residue protein sequence, read N- to C-terminus: WD repeat-containing protein 64 (1081 aa).

WD repeat units lie at residues 102–152, 153–198, 199–265, 266–314, 315–356, 357–400, 401–444, 445–488, 489–532, 533–631, 632–740, 741–803, 804–857, and 858–895; these read DPIA…ATQK, GLIT…GSSQ, ENYF…VLDS, KNFK…LEDN, LPVR…NIST, KPVG…TLSL, LQVF…TRMI, QDTK…ETGL, QVYQ…FGSG, QEMK…LIVE, RNFS…PQSS, KGSK…EGRL, LKDM…EKKF, and KQLL…RLWH. Residues 726-745 are compositionally biased toward low complexity; the sequence is CSSSQCESSKGPQSSKGSKQ. The tract at residues 726 to 757 is disordered; it reads CSSSQCESSKGPQSSKGSKQSIHDSEVKGEQT. Residues 746-756 are compositionally biased toward basic and acidic residues; it reads SIHDSEVKGEQ. The interval 1036–1060 is disordered; the sequence is DSSDGITGKKKGGHVQREKAPRRRS. A compositionally biased stretch (basic residues) spans 1043–1060; it reads GKKKGGHVQREKAPRRRS.

This Homo sapiens (Human) protein is WD repeat-containing protein 64 (WDR64).